A 480-amino-acid chain; its full sequence is Flap endonuclease 1 (480 aa).

The tract at residues 1-106 (MGIKGLTKFI…SELEKRGEKR (106 aa)) is N-domain. D34 is a Mg(2+) binding site. DNA contacts are provided by R47 and R72. Mg(2+)-binding residues include D88, E160, E162, D181, and D183. The tract at residues 124–266 (EIKKQSGRTV…KTAYNLIKEY (143 aa)) is I-domain. E160 contacts DNA. DNA is bound by residues G244 and D246. D246 contributes to the Mg(2+) binding site. Positions 349-357 (TQRRLDTFF) are interaction with PCNA. The tract at residues 379 to 461 (TKGKGKKREI…NIKNENVKED (83 aa)) is disordered. Basic and acidic residues predominate over residues 404–428 (NVKDEKKNNEKVDELKNKSDENLVK). Residues 429–438 (DEEDDQDDYD) show a composition bias toward acidic residues.

This sequence belongs to the XPG/RAD2 endonuclease family. FEN1 subfamily. As to quaternary structure, interacts with PCNA. Three molecules of FEN1 bind to one PCNA trimer with each molecule binding to one PCNA monomer. PCNA stimulates the nuclease activity without altering cleavage specificity. The cofactor is Mg(2+). Post-translationally, phosphorylated. Phosphorylation upon DNA damage induces relocalization to the nuclear plasma.

It is found in the nucleus. The protein resides in the nucleolus. It localises to the nucleoplasm. The protein localises to the mitochondrion. With respect to regulation, inhibited by monovalent metal ions. Its function is as follows. Structure-specific nuclease with 5'-flap endonuclease and 5'-3' exonuclease activities involved in DNA replication and repair. During DNA replication, cleaves the 5'-overhanging flap structure that is generated by displacement synthesis when DNA polymerase encounters the 5'-end of a downstream Okazaki fragment. It enters the flap from the 5'-end and then tracks to cleave the flap base, leaving a nick for ligation. Also involved in the long patch base excision repair (LP-BER) pathway, by cleaving within the apurinic/apyrimidinic (AP) site-terminated flap. Acts as a genome stabilization factor that prevents flaps from equilibrating into structures that lead to duplications and deletions. Also possesses 5'-3' exonuclease activity on nicked or gapped double-stranded DNA, and exhibits RNase H activity. Also involved in replication and repair of rDNA and in repairing mitochondrial DNA. The sequence is that of Flap endonuclease 1 from Plasmodium yoelii yoelii.